Here is a 471-residue protein sequence, read N- to C-terminus: MDYLPLFADIRQRPVLVVGGGEVAARKVALLKKAGAIIKIVAKNIHPELQILQENHEIEWLAKSFSPEQLDHVFLVIAATNDSLLNQQIYQAAEQRHRLVNVVDDQQKCSFIFPSIVDRAPITLALSSAGTSPVLVRMLREKLEALLPQSLGKMAEIAGKWRPRIKEKLPAIKDRRLFWEKAFNGLFAHKVASGDWESAEKTLAEQLEKDNPKQGEIILVGAGPGDAGLLTLRGLQALQQADIVLYDYLVSPAVLEMIRRDAQKICVGKRAGHHSVAQEETNRRLIEWAQQGKKVVRLKGGDPFIFGRGGEELQAAKQASIPFQVVPGITAASGAAAYAGIPLTHRDYSQNVVFITGHCQKDGNGLDWATLARPHQTLVIYMGVMNAGKISEALIKHGRKADTPVAIIAHATLPNQQILNGRLDQLESLAKQAETPALLIIGEVGGLQSDLSWFSSKTDKEDTKSSLINLA.

A precorrin-2 dehydrogenase /sirohydrochlorin ferrochelatase region spans residues M1–L203. NAD(+) is bound by residues E22 to V23 and K43 to N44. At S128 the chain carries Phosphoserine. The uroporphyrinogen-III C-methyltransferase stretch occupies residues G215 to A471. S-adenosyl-L-methionine is bound at residue P224. Residue D247 is the Proton acceptor of the active site. The active-site Proton donor is the K269. S-adenosyl-L-methionine-binding positions include G300–D302, I305, T330–A331, M382, and A411.

This sequence in the N-terminal section; belongs to the precorrin-2 dehydrogenase / sirohydrochlorin ferrochelatase family. It in the C-terminal section; belongs to the precorrin methyltransferase family.

The enzyme catalyses uroporphyrinogen III + 2 S-adenosyl-L-methionine = precorrin-2 + 2 S-adenosyl-L-homocysteine + H(+). It carries out the reaction precorrin-2 + NAD(+) = sirohydrochlorin + NADH + 2 H(+). The catalysed reaction is siroheme + 2 H(+) = sirohydrochlorin + Fe(2+). It functions in the pathway cofactor biosynthesis; adenosylcobalamin biosynthesis; precorrin-2 from uroporphyrinogen III: step 1/1. The protein operates within cofactor biosynthesis; adenosylcobalamin biosynthesis; sirohydrochlorin from precorrin-2: step 1/1. It participates in porphyrin-containing compound metabolism; siroheme biosynthesis; precorrin-2 from uroporphyrinogen III: step 1/1. Its pathway is porphyrin-containing compound metabolism; siroheme biosynthesis; siroheme from sirohydrochlorin: step 1/1. It functions in the pathway porphyrin-containing compound metabolism; siroheme biosynthesis; sirohydrochlorin from precorrin-2: step 1/1. Functionally, multifunctional enzyme that catalyzes the SAM-dependent methylations of uroporphyrinogen III at position C-2 and C-7 to form precorrin-2 via precorrin-1. Then it catalyzes the NAD-dependent ring dehydrogenation of precorrin-2 to yield sirohydrochlorin. Finally, it catalyzes the ferrochelation of sirohydrochlorin to yield siroheme. The sequence is that of Siroheme synthase from Zymomonas mobilis subsp. mobilis (strain ATCC 31821 / ZM4 / CP4).